The chain runs to 193 residues: dTTP/UTP pyrophosphatase (193 aa).

Catalysis depends on Asp77, which acts as the Proton acceptor.

Belongs to the Maf family. YhdE subfamily. Requires a divalent metal cation as cofactor.

The protein localises to the cytoplasm. It catalyses the reaction dTTP + H2O = dTMP + diphosphate + H(+). The catalysed reaction is UTP + H2O = UMP + diphosphate + H(+). In terms of biological role, nucleoside triphosphate pyrophosphatase that hydrolyzes dTTP and UTP. May have a dual role in cell division arrest and in preventing the incorporation of modified nucleotides into cellular nucleic acids. The chain is dTTP/UTP pyrophosphatase from Bacteroides fragilis (strain YCH46).